The following is a 370-amino-acid chain: tRNA-specific 2-thiouridylase MnmA (370 aa).

Residues 24–31 and Leu50 contribute to the ATP site; that span reads AMSGGVDS. The active-site Nucleophile is the Cys119. Cysteines 119 and 215 form a disulfide. Gly143 lines the ATP pocket. The segment at 165 to 167 is interaction with tRNA; the sequence is KDQ. Cys215 functions as the Cysteine persulfide intermediate in the catalytic mechanism.

It belongs to the MnmA/TRMU family.

Its subcellular location is the cytoplasm. The catalysed reaction is S-sulfanyl-L-cysteinyl-[protein] + uridine(34) in tRNA + AH2 + ATP = 2-thiouridine(34) in tRNA + L-cysteinyl-[protein] + A + AMP + diphosphate + H(+). In terms of biological role, catalyzes the 2-thiolation of uridine at the wobble position (U34) of tRNA, leading to the formation of s(2)U34. In Wolbachia pipientis wMel, this protein is tRNA-specific 2-thiouridylase MnmA.